The primary structure comprises 424 residues: 3-isopropylmalate dehydratase large subunit (424 aa).

[4Fe-4S] cluster-binding residues include cysteine 299, cysteine 359, and cysteine 362.

It belongs to the aconitase/IPM isomerase family. LeuC type 2 subfamily. As to quaternary structure, heterodimer of LeuC and LeuD. [4Fe-4S] cluster is required as a cofactor.

The enzyme catalyses (2R,3S)-3-isopropylmalate = (2S)-2-isopropylmalate. The protein operates within amino-acid biosynthesis; L-leucine biosynthesis; L-leucine from 3-methyl-2-oxobutanoate: step 2/4. Catalyzes the isomerization between 2-isopropylmalate and 3-isopropylmalate, via the formation of 2-isopropylmaleate. The polypeptide is 3-isopropylmalate dehydratase large subunit (Hydrogenobaculum sp. (strain Y04AAS1)).